A 471-amino-acid chain; its full sequence is MARAEIVSHEPATGAEVWRGKVGDVEEVVARARRAWPAWAAQPLATRIELVRRFANEVRKDADNLATMISRETGKPLWEARTEVDSVVNKVEISIRAYADRTSQRKLDSALQGTAALRHKPHGVLAVLGPYNFPAHLPNGHIVPALIAGNAVVFKPSEKTPATGEMLAQCFHRAGIPAAVVQVLIGGPEEGQALVAHDGIDGVLFTGSAHAGIAINRKLASNPGKIVALEMGGNNPIVVWDTPKIEDAATLIVQSAFTSAGQRCTAARRLIIKASMFDEVIDHVKRLADRIIVGAPFDDPAPFMGPVIDNRTADGLTESFVYLLSSGGRPIKHMVRLQEDRPFLSPAIIDVTAVADRPDVELFGPLLQVVRVDDFDEAIAEANNTRFGLSASLIGGDPQDYNRFWANIRAGVVNWNRPTNGASSAAPFGGVGLSGNHRPSAYYAADYCAYPVASTEVDQPRASIGVGLRSD.

207–212 (GSAHAG) is a binding site for NAD(+). Active-site residues include Glu230 and Cys264.

The protein belongs to the aldehyde dehydrogenase family. AstD subfamily.

It catalyses the reaction N-succinyl-L-glutamate 5-semialdehyde + NAD(+) + H2O = N-succinyl-L-glutamate + NADH + 2 H(+). It functions in the pathway amino-acid degradation; L-arginine degradation via AST pathway; L-glutamate and succinate from L-arginine: step 4/5. In terms of biological role, catalyzes the NAD-dependent reduction of succinylglutamate semialdehyde into succinylglutamate. This chain is N-succinylglutamate 5-semialdehyde dehydrogenase, found in Novosphingobium aromaticivorans (strain ATCC 700278 / DSM 12444 / CCUG 56034 / CIP 105152 / NBRC 16084 / F199).